Reading from the N-terminus, the 418-residue chain is Sterigmatocystin 8-O-methyltransferase (418 aa).

A propeptide spanning residues Met1–Glu41 is cleaved from the precursor. A substrate-binding site is contributed by Met170–Phe176. The interval Leu206–Met225 is substrate binding. Residues Gly254–Gly255, Asp277, Asp297–Ile298, and Arg313 contribute to the S-adenosyl-L-methionine site. The active-site Proton acceptor is His317.

The protein belongs to the class I-like SAM-binding methyltransferase superfamily. Cation-independent O-methyltransferase family. COMT subfamily.

The catalysed reaction is sterigmatocystin + S-adenosyl-L-methionine = 8-O-methylsterigmatocystin + S-adenosyl-L-homocysteine + H(+). It catalyses the reaction dihydrosterigmatocystin + S-adenosyl-L-methionine = 8-O-methyldihydrosterigmatocystin + S-adenosyl-L-homocysteine + H(+). Its pathway is mycotoxin biosynthesis; aflatoxin biosynthesis. Involved in the conversion of sterigmatocystin to O-methylsterigmatocystin (OMST) and dihydrosterigmatocystin to dihydro-o-methylsterigmatocystin in the aflatoxin biosynthesis pathway. This chain is Sterigmatocystin 8-O-methyltransferase (omtA), found in Aspergillus flavus (strain ATCC 200026 / FGSC A1120 / IAM 13836 / NRRL 3357 / JCM 12722 / SRRC 167).